Consider the following 370-residue polypeptide: Aldo-keto reductase NECHADRAFT_45914 (370 aa).

Residue Asp-78 coordinates NADP(+). Tyr-83 (proton donor) is an active-site residue. His-174 is a binding site for substrate. NADP(+) contacts are provided by residues 204-205, Gln-230, 259-269, and 333-341; these read SS, APLASGRLARR, and STVQRIEEA.

Belongs to the aldo/keto reductase family.

It functions in the pathway secondary metabolite biosynthesis. In terms of biological role, aldo-keto reductase; part of the gene cluster that mediates the biosynthesis of sansalvamide, a cyclic pentadepsipeptide that shows promising results as potential anti-cancer drug. The nonribosmal peptide synthetase NRPS30 produces sansalvamide by incorporating successively one phenylalanine, one leucine, one alpha-hydroxyisocaproic acid (HICA), one valine and one leucine before sansalvamide is released from by cyclization by the terminal C domain of NRPS30. The HICA residue is probably provided by reduction of alpha-ketoisocaproate by the cluster-specific aldo-keto reductase (NECHADRAFT_45914). This Fusarium vanettenii (strain ATCC MYA-4622 / CBS 123669 / FGSC 9596 / NRRL 45880 / 77-13-4) (Fusarium solani subsp. pisi) protein is Aldo-keto reductase NECHADRAFT_45914.